The chain runs to 218 residues: Small ribosomal subunit protein uS5 (218 aa).

Residues 1–45 (MPGRQRRDGGNGPAGQNSNGPEGRDNRRGGGDRRGGGDRRDNAAE) are disordered. The segment covering 22 to 45 (EGRDNRRGGGDRRGGGDRRDNAAE) has biased composition (basic and acidic residues). In terms of domain architecture, S5 DRBM spans 48-111 (QLERVVAINR…EEARKGFFRV (64 aa)).

The protein belongs to the universal ribosomal protein uS5 family. Part of the 30S ribosomal subunit. Contacts proteins S4 and S8.

In terms of biological role, with S4 and S12 plays an important role in translational accuracy. Its function is as follows. Located at the back of the 30S subunit body where it stabilizes the conformation of the head with respect to the body. In Nocardia farcinica (strain IFM 10152), this protein is Small ribosomal subunit protein uS5.